The chain runs to 800 residues: Heterogeneous nuclear ribonucleoprotein U (800 aa).

Position 2 is an N-acetylserine (Ser-2). Position 4 is a phosphoserine (Ser-4). One can recognise an SAP domain in the interval 8–42 (VKKLKVSELKEELKKRRLSDKGLKADLMDRLQAAL). Residues Lys-17 and Lys-21 each carry the N6-acetyllysine modification. Residues 41–257 (ALDNEAGGRP…PQPPVEEEDE (217 aa)) are disordered. Residue Ser-58 is modified to Phosphoserine. Low complexity-rich tracts occupy residues 71 to 80 (AGLEQEAAAG) and 103 to 113 (ENGAAGAADAG). 2 stretches are compositionally biased toward acidic residues: residues 114–128 (AMEE…ENGD) and 134–147 (EGED…EGAG). The span at 153 to 173 (GEQQSQPPAAAAQQQPSQQRG) shows a compositional bias: low complexity. The residue at position 181 (Lys-181) is an N6-acetyllysine. Ser-182 carries the ADP-ribosylserine modification. A compositionally biased stretch (low complexity) spans 194-205 (APPGARQGQQQA). Residues 209–242 (GKTEQKGGDKKRGVKRPREDHGRGYFEYIEENKY) are compositionally biased toward basic and acidic residues. At Arg-231 the chain carries Citrulline. Lys-241 bears the N6-acetyllysine; alternate mark. Lys-241 participates in a covalent cross-link: Glycyl lysine isopeptide (Lys-Gly) (interchain with G-Cter in SUMO1); alternate. Lys-241 is covalently cross-linked (Glycyl lysine isopeptide (Lys-Gly) (interchain with G-Cter in SUMO2); alternate). Tyr-242 carries the post-translational modification Phosphotyrosine. Ser-243 and Ser-247 each carry phosphoserine. The region spanning 244–440 (RAKSPQPPVE…VEFNFGQKEK (197 aa)) is the B30.2/SPRY domain. At Thr-262 the chain carries Phosphothreonine. At Lys-328 the chain carries N6-acetyllysine. An ATPase domain region spans residues 464–648 (PKGPEEKKDC…QKLLEQYKEE (185 aa)). Lys-471 participates in a covalent cross-link: Glycyl lysine isopeptide (Lys-Gly) (interchain with G-Cter in SUMO2). ATP is bound at residue 480–487 (GLPGAGKT). 2 positions are modified to N6-acetyllysine; alternate: Lys-492 and Lys-500. Residues Lys-492 and Lys-500 each participate in a glycyl lysine isopeptide (Lys-Gly) (interchain with G-Cter in SUMO2); alternate cross-link. Residue Thr-508 is modified to Phosphothreonine. A Glycyl lysine isopeptide (Lys-Gly) (interchain with G-Cter in SUMO2) cross-link involves residue Lys-512. Lys-527 is modified (N6-acetyllysine). Position 541 is an N6-acetyllysine; alternate (Lys-541). Lys-541 participates in a covalent cross-link: Glycyl lysine isopeptide (Lys-Gly) (interchain with G-Cter in SUMO2); alternate. Lys-550 participates in a covalent cross-link: Glycyl lysine isopeptide (Lys-Gly) (interchain with G-Cter in SUMO2). Phosphothreonine is present on Thr-558. Glycyl lysine isopeptide (Lys-Gly) (interchain with G-Cter in SUMO2) cross-links involve residues Lys-585 and Lys-602. Positions 587 to 602 (EDYKQRTQKKAEVEGK) are actin-binding. Lys-611 carries the N6-acetyllysine; alternate modification. Lys-611 is covalently cross-linked (Glycyl lysine isopeptide (Lys-Gly) (interchain with G-Cter in SUMO2); alternate). A coiled-coil region spans residues 626 to 653 (DEITYVELQKEEAQKLLEQYKEESKKAL). Glycyl lysine isopeptide (Lys-Gly) (interchain with G-Cter in SUMO2) cross-links involve residues Lys-640 and Lys-646. Basic and acidic residues predominate over residues 647-659 (EESKKALPPEKKQ). Residues 647–729 (EESKKALPPE…GSGGIGYPYP (83 aa)) form a disordered region. Arg-678 is modified (omega-N-methylarginine). A compositionally biased stretch (gly residues) spans 686 to 704 (GGFNMRGGNFRGGAPGNRG). An RNA-binding RGG-box region spans residues 690-715 (MRGGNFRGGAPGNRGGYNRRGNMPQR). Arg-691, Arg-696, and Arg-703 each carry asymmetric dimethylarginine. 2 positions are modified to asymmetric dimethylarginine; alternate: Arg-709 and Arg-715. An omega-N-methylarginine; alternate mark is found at Arg-709 and Arg-715. The span at 715-725 (RGGGGGSGGIG) shows a compositional bias: gly residues. 2 positions are modified to asymmetric dimethylarginine: Arg-730 and Arg-737. Residues 745 to 774 (NYNRGGMPNRGNYNQNFRGRGNNRGYKNQS) form a disordered region. Lys-789 carries the post-translational modification N6-acetyllysine; alternate. A Glycyl lysine isopeptide (Lys-Gly) (interchain with G-Cter in SUMO2); alternate cross-link involves residue Lys-789.

As to quaternary structure, oligomer (via ATPase domain and RNA-binding RGG-box region); oligomerization occurs upon ATP-binding in a chromatin-associated RNAs (caRNAs)- and transcription-dependent manner and is required for chromatin decompaction. ATP hydrolysis is required to cycle from an oligomeric to monomeric state to compact chromatin. Component of the coding region determinant (CRD)-mediated complex, composed of DHX9, HNRNPU, IGF2BP1, SYNCRIP and YBX1. Identified in the spliceosome C complex. Identified in a IGF2BP1-dependent mRNP granule complex containing untranslated mRNAs. Associates with heterogeneous nuclear ribonucleoprotein (hnRNP) particles. Associates (via middle region) with the C-terminal domain (CTD) RNA polymerase II (Pol II) holoenzyme; this association occurs in a RNA-independent manner. Associates (via middle region) with the core-TFIIH basal transcription factor complex; this association inhibits the CTD phosphorylation of RNA polymerase II holoenzyme by down-regulating TFIIH kinase activity. Associates with the telomerase holoenzyme complex. Associates with spindle microtubules (MTs) in a TPX2-dependent manner. Interacts (via C-terminus) with actin; this interaction is direct and mediates association with the phosphorylated CTD of RNA polymerase II and is disrupted in presence of the long non-coding H19 RNA. Interacts with AURKA. Interacts (via C-terminus) with CBX5; this interaction is, at least in part, RNA-dependent. Interacts with CR2. Interacts with CRY1. Interacts (via C-terminus) with EP300; this interaction enhances DNA-binding to nuclear scaffold/matrix attachment region (S/MAR) elements. Interacts with ERBB4. Interacts with GEMIN5. Interacts with IGF2BP1. Interacts with IGF2BP2 and IGF2BP3. Interacts with NCL; this interaction occurs during mitosis. Interacts (via C-terminus) with NR3C1 (via C-terminus). Interacts with PLK1; this interaction induces phosphorylation of HNRNPU at Ser-58 in mitosis. Interacts with POU3F4. Interacts with SMARCA4; this interaction occurs in embryonic stem cells and stimulates global Pol II-mediated transcription. Interacts (via C-terminus) with TOP2A; this interaction protects the topoisomerase TOP2A from degradation and positively regulates the relaxation of supercoiled DNA by TOP2A in a RNA-dependent manner. Interacts with TPX2; this interaction recruits HNRNPU to spindle microtubules (MTs). Interacts with UBQLN2. Interacts (via RNA-binding RGG-box region) with ZBTB7B; the interaction facilitates the recruitment of long non-coding RNA Blnc1 by ZBTB7B. Interacts with ERCC6. Cleaved at Asp-94 by CASP3 during T-cell apoptosis, resulting in a loss of DNA- and chromatin-binding activities. Post-translationally, extensively phosphorylated. Phosphorylated on Ser-58 by PLK1 and dephosphorylated by protein phosphatase 2A (PP2A) in mitosis. In terms of processing, arg-709 and Arg-715 are dimethylated, probably to asymmetric dimethylarginine. Citrullinated by PADI4.

It localises to the nucleus. Its subcellular location is the nucleus matrix. The protein resides in the chromosome. It is found in the nucleus speckle. The protein localises to the cytoplasm. It localises to the cytoskeleton. Its subcellular location is the microtubule organizing center. The protein resides in the centrosome. It is found in the centromere. The protein localises to the kinetochore. It localises to the spindle. Its subcellular location is the spindle pole. The protein resides in the midbody. It is found in the cell surface. The protein localises to the cytoplasmic granule. Functionally, DNA- and RNA-binding protein involved in several cellular processes such as nuclear chromatin organization, telomere-length regulation, transcription, mRNA alternative splicing and stability, Xist-mediated transcriptional silencing and mitotic cell progression. Plays a role in the regulation of interphase large-scale gene-rich chromatin organization through chromatin-associated RNAs (caRNAs) in a transcription-dependent manner, and thereby maintains genomic stability. Required for the localization of the long non-coding Xist RNA on the inactive chromosome X (Xi) and the subsequent initiation and maintenance of X-linked transcriptional gene silencing during X-inactivation. Plays a role as a RNA polymerase II (Pol II) holoenzyme transcription regulator. Promotes transcription initiation by direct association with the core-TFIIH basal transcription factor complex for the assembly of a functional pre-initiation complex with Pol II in a actin-dependent manner. Blocks Pol II transcription elongation activity by inhibiting the C-terminal domain (CTD) phosphorylation of Pol II and dissociates from Pol II pre-initiation complex prior to productive transcription elongation. Positively regulates CBX5-induced transcriptional gene silencing and retention of CBX5 in the nucleus. Negatively regulates glucocorticoid-mediated transcriptional activation. Key regulator of transcription initiation and elongation in embryonic stem cells upon leukemia inhibitory factor (LIF) signaling. Involved in the long non-coding RNA H19-mediated Pol II transcriptional repression. Participates in the circadian regulation of the core clock component BMAL1 transcription. Plays a role in the regulation of telomere length. Plays a role as a global pre-mRNA alternative splicing modulator by regulating U2 small nuclear ribonucleoprotein (snRNP) biogenesis. Plays a role in mRNA stability. Component of the CRD-mediated complex that promotes MYC mRNA stabilization. Enhances the expression of specific genes, such as tumor necrosis factor TNFA, by regulating mRNA stability, possibly through binding to the 3'-untranslated region (UTR). Plays a role in mitotic cell cycle regulation. Involved in the formation of stable mitotic spindle microtubules (MTs) attachment to kinetochore, spindle organization and chromosome congression. Phosphorylation at Ser-58 by PLK1 is required for chromosome alignement and segregation and progression through mitosis. Also contributes to the targeting of AURKA to mitotic spindle MTs. Binds to double- and single-stranded DNA and RNA, poly(A), poly(C) and poly(G) oligoribonucleotides. Binds to chromatin-associated RNAs (caRNAs). Associates with chromatin to scaffold/matrix attachment region (S/MAR) elements in a chromatin-associated RNAs (caRNAs)-dependent manner. Binds (via RNA-binding RGG-box region) to the long non-coding Xist RNA; this binding is direct and bridges the Xist RNA and the inactive chromosome X (Xi). Binds the long non-coding H19 RNA. Binds to SMN1/2 pre-mRNAs at G/U-rich regions. Binds to small nuclear RNAs (snRNAs). Binds to the 3'-UTR of TNFA mRNA. Also negatively regulates embryonic stem cell differentiation upon LIF signaling. Required for embryonic development. Binds to brown fat long non-coding RNA 1 (Blnc1); facilitates the recruitment of Blnc1 by ZBTB7B required to drive brown and beige fat development and thermogenesis. The chain is Heterogeneous nuclear ribonucleoprotein U from Mus musculus (Mouse).